A 222-amino-acid polypeptide reads, in one-letter code: Phosphoenolpyruvate guanylyltransferase (222 aa).

Phosphoenolpyruvate is bound by residues T147, G163, and S166.

The protein belongs to the CofC family.

It carries out the reaction phosphoenolpyruvate + GTP + H(+) = enolpyruvoyl-2-diphospho-5'-guanosine + diphosphate. Its pathway is cofactor biosynthesis; coenzyme F420 biosynthesis. Functionally, guanylyltransferase that catalyzes the activation of phosphoenolpyruvate (PEP) as enolpyruvoyl-2-diphospho-5'-guanosine, via the condensation of PEP with GTP. It is involved in the biosynthesis of coenzyme F420, a hydride carrier cofactor. This chain is Phosphoenolpyruvate guanylyltransferase, found in Streptosporangium roseum (strain ATCC 12428 / DSM 43021 / JCM 3005 / KCTC 9067 / NCIMB 10171 / NRRL 2505 / NI 9100).